The primary structure comprises 472 residues: Membrane-bound acylglycerophosphatidylinositol O-acyltransferase MBOAT7 (472 aa).

At 1–5 (MSPEE) the chain is on the cytoplasmic side. Residues 6-22 (WTYLVVLLISIPIGFLF) traverse the membrane as a helical segment. The Lumenal segment spans residues 23–33 (KKAGPGLKRWG). A helical transmembrane segment spans residues 34–57 (AAAVGLGLTLFTCGPHTLHSLVTI). Over 58–73 (LGTWALIQAQPCSCHA) the chain is Cytoplasmic. Residues 74–93 (LALAWTFSYLLFFRALSLLG) traverse the membrane as a helical segment. Residues 94–194 (LPTPTPFTNA…VPSLRPLLRR (101 aa)) lie on the Lumenal side of the membrane. A helical membrane pass occupies residues 195 to 212 (AWPAPLFGLLFLLSSHLF). Residues 213–231 (PLEAVREDAFYARPLPARL) are Cytoplasmic-facing. A helical transmembrane segment spans residues 232–261 (FYMIPVFFAFRMRFYVAWIAAECGCIAAGF). Residues 262 to 426 (GAYPVAAKAR…LSLADTLRYW (165 aa)) lie on the Lumenal side of the membrane. The N-linked (GlcNAc...) asparagine glycan is linked to N321. A helical transmembrane segment spans residues 427 to 447 (ASIYFCIHFLALAALGLGLAL). The Cytoplasmic segment spans residues 448–472 (GGGSPSRRKAASQPTSLAPEKLREE). Positions 453-472 (SRRKAASQPTSLAPEKLREE) are disordered.

The protein belongs to the membrane-bound acyltransferase family. Interacts with SPTSSA; the interaction facilitates MBOAT7 location to mitochondria-associated membranes (MAMs). Overexpressed in metastatic breast and bladder carcinomas relative to normal breast epithelium and urothelium.

The protein localises to the endoplasmic reticulum membrane. The catalysed reaction is a 1-acyl-sn-glycero-3-phospho-(1D-myo-inositol) + (5Z,8Z,11Z,14Z)-eicosatetraenoyl-CoA = a 1-acyl-2-(5Z,8Z,11Z,14Z-eicosatetraenoyl)-sn-glycero-3-phospho-(1D-myo-inositol) + CoA. The enzyme catalyses (5Z,8Z,11Z,14Z)-eicosatetraenoyl-CoA + 1-hexadecanoyl-sn-glycero-3-phosphocholine = 1-hexadecanoyl-2-(5Z,8Z,11Z,14Z-eicosatetraenoyl)-sn-glycero-3-phosphocholine + CoA. It carries out the reaction a 1-acyl-sn-glycero-3-phospho-(1D-myo-inositol) + an acyl-CoA = a 1,2-diacyl-sn-glycero-3-phospho-(1D-myo-inositol) + CoA. It catalyses the reaction 1-octadecanoyl-sn-glycero-3-phospho-(1D-myo-inositol) + (5Z,8Z,11Z,14Z)-eicosatetraenoyl-CoA = 1-octadecanoyl-2-(5Z,8Z,11Z,14Z-eicosatetraenoyl)-sn-glycero-3-phospho-(1D-myo-inositol) + CoA. It participates in lipid metabolism; phospholipid metabolism. Its activity is regulated as follows. Activity is inhibited by thimerosal. Its function is as follows. Acyltransferase which catalyzes the transfer of an acyl group from an acyl-CoA to a lysophosphatidylinositol (1-acylglycerophosphatidylinositol or LPI) leading to the production of a phosphatidylinositol (1,2-diacyl-sn-glycero-3-phosphoinositol or PI) and participates in the reacylation step of the phospholipid remodeling pathway also known as the Lands cycle. Prefers arachidonoyl-CoA as the acyl donor, thus contributing to the regulation of free levels arachidonic acid in cell. In liver, participates in the regulation of triglyceride metabolism through the phosphatidylinositol acyl-chain remodeling regulation. This is Membrane-bound acylglycerophosphatidylinositol O-acyltransferase MBOAT7 from Homo sapiens (Human).